The chain runs to 615 residues: DNA mismatch repair protein MutL (615 aa).

Positions 362-397 (HFAEPAVREPVAPRYSPAPASGGRPAASWPNAQPGY) are disordered. The span at 378–391 (PAPASGGRPAASWP) shows a compositional bias: low complexity.

It belongs to the DNA mismatch repair MutL/HexB family.

In terms of biological role, this protein is involved in the repair of mismatches in DNA. It is required for dam-dependent methyl-directed DNA mismatch repair. May act as a 'molecular matchmaker', a protein that promotes the formation of a stable complex between two or more DNA-binding proteins in an ATP-dependent manner without itself being part of a final effector complex. The polypeptide is DNA mismatch repair protein MutL (Escherichia fergusonii (strain ATCC 35469 / DSM 13698 / CCUG 18766 / IAM 14443 / JCM 21226 / LMG 7866 / NBRC 102419 / NCTC 12128 / CDC 0568-73)).